The following is a 68-amino-acid chain: Lipopolysaccharide export system ATP-binding protein LptB (68 aa).

It belongs to the ABC transporter superfamily. Outer membrane lipopolysaccharide export (TC 1.B.42) family. As to quaternary structure, component of the lipopolysaccharide transport and assembly complex. The LptBFG transporter is composed of two ATP-binding proteins (LptB) and two transmembrane proteins (LptF and LptG).

The protein localises to the cytoplasm. It localises to the cell inner membrane. Functionally, part of the ABC transporter complex LptBFG involved in the translocation of lipopolysaccharide (LPS) from the inner membrane to the outer membrane. Probably responsible for energy coupling to the transport system. The sequence is that of Lipopolysaccharide export system ATP-binding protein LptB (lptB) from Klebsiella oxytoca.